The sequence spans 876 residues: MAP7 domain-containing protein 3 (876 aa).

At Met-1 the chain carries N-acetylmethionine. Residues 65–144 (NDIKQRLARE…DEAQKEKFTA (80 aa)) adopt a coiled-coil conformation. Disordered stretches follow at residues 72-137 (ARER…KDEA) and 170-246 (AMAN…KPRV). Residues 171–183 (MANSESKTANKRS) are compositionally biased toward polar residues. Residue Ser-185 is modified to Phosphoserine. Over residues 191–211 (QGTSALIRQMPLSSAGLQNSV) the composition is skewed to polar residues. Basic and acidic residues predominate over residues 214–244 (RKTDKERSSSLNRRDSNLHSSTDKEQAERKP). Ser-322 carries the post-translational modification Phosphoserine. Residues 407–475 (EAAPEGSLEA…ARDAPKKSEM (69 aa)) are disordered. Positions 425–438 (APKESVKGSPKESM) are enriched in basic and acidic residues. Phosphoserine occurs at positions 441, 457, and 461. Basic and acidic residues predominate over residues 465-475 (KARDAPKKSEM). Position 490 is a phosphoserine (Ser-490). Disordered stretches follow at residues 509-533 (SPIS…SKQS), 613-697 (QREK…KKEH), and 723-754 (RKTD…SDKD). Residues 510 to 521 (PISTNRQIQKNC) show a composition bias toward polar residues. Ser-524 carries the phosphoserine modification. 2 coiled-coil regions span residues 558–640 (VKKK…MAKE) and 689–724 (EADK…RTRK). Composition is skewed to basic and acidic residues over residues 613 to 639 (QREK…DMAK) and 680 to 697 (GDAK…KKEH). The span at 742–752 (EEAEADNEESD) shows a compositional bias: acidic residues. 2 positions are modified to phosphoserine: Ser-770 and Ser-817. Residues 802–876 (PKTYFNGDLK…LPKSSDTFRQ (75 aa)) are disordered. Residues 820-830 (DTSIQEVVSRP) show a composition bias toward polar residues. Over residues 831–842 (SSKRMTSHTTKT) the composition is skewed to basic residues. A Phosphoserine modification is found at Ser-832. Positions 848 to 860 (TNTTSRSSAQTKS) are enriched in polar residues. Residues 861-876 (EGFHDILPKSSDTFRQ) are compositionally biased toward basic and acidic residues.

This sequence belongs to the MAP7 family. Interacts (via N-terminus coiled coil domains) with tubulin and microtubules.

The protein localises to the cytoplasm. The protein resides in the cytoskeleton. It is found in the spindle. Functionally, promotes the assembly and stability of microtubules. The chain is MAP7 domain-containing protein 3 (MAP7D3) from Homo sapiens (Human).